Consider the following 322-residue polypeptide: Ig gamma-2A chain C region (322 aa).

Ig-like domains follow at residues 6-98 (PSVY…KKIV), 115-212 (VFIF…KSIS), and 221-317 (PQVY…KSLS). 3 disulfide bridges follow: cysteine 27–cysteine 82, cysteine 136–cysteine 196, and cysteine 242–cysteine 300. Asparagine 172 carries an N-linked (GlcNAc...) asparagine glycan.

The protein is Ig gamma-2A chain C region (Igg-2a) of Rattus norvegicus (Rat).